We begin with the raw amino-acid sequence, 456 residues long: tRNA-2-methylthio-N(6)-dimethylallyladenosine synthase (456 aa).

Positions 6-125 (KRLFIKTYGC…LPELIAQAHR (120 aa)) constitute an MTTase N-terminal domain. Cysteine 15, cysteine 51, cysteine 88, cysteine 163, cysteine 167, and cysteine 170 together coordinate [4Fe-4S] cluster. The 237-residue stretch at 149–385 (QVEGYSAFVT…QELLSDQQAA (237 aa)) folds into the Radical SAM core domain. In terms of domain architecture, TRAM spans 388–450 (ESMIGRTLPV…RNSLSGSLTG (63 aa)).

It belongs to the methylthiotransferase family. MiaB subfamily. In terms of assembly, monomer. The cofactor is [4Fe-4S] cluster.

The protein localises to the cytoplasm. The enzyme catalyses N(6)-dimethylallyladenosine(37) in tRNA + (sulfur carrier)-SH + AH2 + 2 S-adenosyl-L-methionine = 2-methylsulfanyl-N(6)-dimethylallyladenosine(37) in tRNA + (sulfur carrier)-H + 5'-deoxyadenosine + L-methionine + A + S-adenosyl-L-homocysteine + 2 H(+). In terms of biological role, catalyzes the methylthiolation of N6-(dimethylallyl)adenosine (i(6)A), leading to the formation of 2-methylthio-N6-(dimethylallyl)adenosine (ms(2)i(6)A) at position 37 in tRNAs that read codons beginning with uridine. The protein is tRNA-2-methylthio-N(6)-dimethylallyladenosine synthase of Maricaulis maris (strain MCS10) (Caulobacter maris).